The chain runs to 860 residues: MSEKEGMSEVLEDTISQFRKESRSQSMKEPGFIKETSNLINEASDYLEGKSSNQIYETHPRQNTLESTSSSGRKSKRNEEQKKNLQFSETSTRTGTSQSLSSLTGRTAEYQALVNFLSHETVGEVSPQVSEENQKQLGLGADNFTVNLEAKGLQEFPKDILKIKYVKYLYLDKNQIKTFQGADSGDLLGLEILSLQENGLSSLPSEIQLLHNLRILNVSHNHISHIPKEISQLGNIRQLFFYNNYIENFPSDLECLGNLEILSLGKNKLRHIPDTLPSLKTLRVLNLEYNQLTTFPKALCFLPKLISLDLTGNLISSLPKEIRELKNLETLLMDHNKLTFLAVEIFQLLKIKELQLADNKLEVISHKIENFRELRILILDKNLLKNIPEKISCCAMLECLSLSDNKLTELPKYIHKLNNLRKLHVNRNNMVKITDCISHLNNICSLEFSGNIITDVPIEIKNCQKIIKIELSYNKIMYFPLGLCALDSLYYLSVNGNYISEIPVDISFSKQLLHLELSENKLLIFSEHFCSLINLKYLDLGKNQIKKIPASISNMISLHVLILCCNKFETFPRELCTLENLQVLDLSENQLQKISSDICNLKGIQKLNFSSNQFIHFPIELCQLQSLEQLNISQIKGRKLTRLPGELSNMTQLKELDISNNAIREIPRNIGELRNLVSLHAYNNQISYLPPSLLSLNDLQQLNLSGNNLTALPSAIYNIFSLKEINFDDNPLLRPPVEICKGKQLYTIARYLQRADERDEKILEKIFKIVANNITETNFEFLCQKLNLANSETDMPTKSTVSLSERAHQALVIWKTQSNKLSLTAAALRDQLIRALTMIGAYEIMDKITALNLFTRAIKF.

The interval methionine 1 to leucine 103 is disordered. A compositionally biased stretch (polar residues) spans lysine 50–glycine 72. The span at threonine 90–leucine 103 shows a compositional bias: low complexity. 26 LRR repeats span residues leucine 139–isoleucine 163, lysine 164–aspartate 186, leucine 187–leucine 210, histidine 211–leucine 233, asparagine 235–leucine 256, glycine 257–leucine 279, threonine 281–leucine 302, proline 303–leucine 325, lysine 326–leucine 348, lysine 350–phenylalanine 371, arginine 372–cysteine 394, methionine 396–leucine 417, asparagine 419–leucine 440, asparagine 441–cysteine 463, lysine 465–leucine 486, aspartate 487–lysine 510, leucine 512–leucine 532, isoleucine 533–methionine 555, serine 557–leucine 578, glutamate 579–leucine 601, glycine 603–leucine 624, leucine 627–methionine 650, threonine 651–leucine 673, asparagine 675–leucine 696, asparagine 697–isoleucine 719, and serine 721–glycine 742. The region spanning glutamate 764 to asparagine 852 is the Death domain. One copy of the LRR 27 repeat lies at arginine 856–phenylalanine 860.

The sequence is that of Leucine-rich repeat and death domain-containing protein 1 (LRRD1) from Homo sapiens (Human).